Consider the following 81-residue polypeptide: U10-myrmicitoxin-Mri1b (81 aa).

Residues 1–26 (MRLSYISLTLAIIFVMAIVHAPETEA) form the signal peptide. A propeptide spanning residues 27 to 52 (KAYPEADAVAEAIAVGEADAVGVADP) is cleaved from the precursor. V80 carries the post-translational modification Valine amide.

This sequence belongs to the formicidae venom precursor-01 superfamily. As to expression, expressed by the venom gland.

The protein resides in the secreted. Its function is as follows. Induces paralysis after injection into blowflies (L.caesar), and then death within 24 hours. May have antimicrobial properties, like most ant linear peptides. The protein is U10-myrmicitoxin-Mri1b of Manica rubida (European giant red ant).